The sequence spans 203 residues: Thymidylate kinase (203 aa).

9–16 (GPEGAGKT) is an ATP binding site.

It belongs to the thymidylate kinase family.

It catalyses the reaction dTMP + ATP = dTDP + ADP. In terms of biological role, phosphorylation of dTMP to form dTDP in both de novo and salvage pathways of dTTP synthesis. The protein is Thymidylate kinase of Staphylococcus epidermidis (strain ATCC 35984 / DSM 28319 / BCRC 17069 / CCUG 31568 / BM 3577 / RP62A).